Here is a 335-residue protein sequence, read N- to C-terminus: Large ribosomal subunit protein uL10 (335 aa).

The interval 306–335 (VEETVEEEEEEEEEEDAEEEAAAGLGALFG) is disordered. Acidic residues predominate over residues 308-326 (ETVEEEEEEEEEEDAEEEA).

The protein belongs to the universal ribosomal protein uL10 family. Part of the 50S ribosomal subunit. Forms part of the ribosomal stalk which helps the ribosome interact with GTP-bound translation factors. Forms a heptameric L10(L12)2(L12)2(L12)2 complex, where L10 forms an elongated spine to which the L12 dimers bind in a sequential fashion.

In terms of biological role, forms part of the ribosomal stalk, playing a central role in the interaction of the ribosome with GTP-bound translation factors. This chain is Large ribosomal subunit protein uL10, found in Methanobrevibacter smithii (strain ATCC 35061 / DSM 861 / OCM 144 / PS).